The primary structure comprises 221 residues: Pectate lyase C (221 aa).

Residues 1-27 form the signal peptide; it reads MKKIVSILFMFGLVMGFSQFQPSTVFA.

The protein belongs to the polysaccharide lyase 3 family. Ca(2+) serves as cofactor.

The protein resides in the secreted. The enzyme catalyses Eliminative cleavage of (1-&gt;4)-alpha-D-galacturonan to give oligosaccharides with 4-deoxy-alpha-D-galact-4-enuronosyl groups at their non-reducing ends.. The catalysed reaction is Eliminative cleavage of (1-&gt;4)-alpha-D-galacturonan methyl ester to give oligosaccharides with 4-deoxy-6-O-methyl-alpha-D-galact-4-enuronosyl groups at their non-reducing ends.. Its pathway is glycan metabolism; pectin degradation; 2-dehydro-3-deoxy-D-gluconate from pectin: step 2/5. In terms of biological role, catalyzes the depolymerization of both polygalacturonate and pectins of methyl esterification degree from 22 to 89%, with an endo mode of action. In contrast to the majority of pectate lyases, displays high activity on highly methylated pectins. Is also able to cleave trigalacturonate to galacturonic acid and unsaturated digalacturonate. The chain is Pectate lyase C (pelC) from Bacillus subtilis (strain 168).